A 184-amino-acid chain; its full sequence is uncharacterized protein (184 aa).

Residues 130-149 are disordered; sequence DKDDDKKKKKKDDKKDDPCN.

The protein resides in the virion. This is an uncharacterized protein from Acanthamoeba polyphaga (Amoeba).